The primary structure comprises 1104 residues: Receptor-mediated endocytosis protein 6 (1104 aa).

Residues 156 to 389 (LKIAQVVCYL…EMMDSLLVEN (234 aa)) form the Ras-GAP domain. The disordered stretch occupies residues 663–682 (SSLAKQPSGMVSSASAQNIP). Residues 966-1104 (QKKDKLLQSV…SAVEYIKTIL (139 aa)) form the VPS9 domain.

It belongs to the GAPVD1 family. Interacts with GDP-bound rab-5. Interacts with alpha-adaptin.

It is found in the membrane. It localises to the cytoplasmic vesicle. The protein localises to the clathrin-coated vesicle. Its function is as follows. Acts both as a GTPase-activating protein (GAP) and a guanine nucleotide exchange factor (GEF), and participates in endocytosis. Acts by regulating the activation of rab-5 by exchanging bound GDP for free GTP at clathrin coated pits. This chain is Receptor-mediated endocytosis protein 6 (rme-6), found in Caenorhabditis briggsae.